Consider the following 933-residue polypeptide: Isoleucine--tRNA ligase (933 aa).

The short motif at 57-67 (PYANGNIHVGH) is the 'HIGH' region element. Glu-554 lines the L-isoleucyl-5'-AMP pocket. The 'KMSKS' region signature appears at 595 to 599 (KMSKS). Lys-598 lines the ATP pocket.

It belongs to the class-I aminoacyl-tRNA synthetase family. IleS type 1 subfamily. In terms of assembly, monomer.

The protein localises to the cytoplasm. It catalyses the reaction tRNA(Ile) + L-isoleucine + ATP = L-isoleucyl-tRNA(Ile) + AMP + diphosphate. In terms of biological role, catalyzes the attachment of isoleucine to tRNA(Ile). As IleRS can inadvertently accommodate and process structurally similar amino acids such as valine, to avoid such errors it has two additional distinct tRNA(Ile)-dependent editing activities. One activity is designated as 'pretransfer' editing and involves the hydrolysis of activated Val-AMP. The other activity is designated 'posttransfer' editing and involves deacylation of mischarged Val-tRNA(Ile). This chain is Isoleucine--tRNA ligase, found in Streptococcus pyogenes serotype M6 (strain ATCC BAA-946 / MGAS10394).